Reading from the N-terminus, the 288-residue chain is Bifunctional protein FolD (288 aa).

NADP(+) is bound by residues glycine 166–serine 168, serine 191, and isoleucine 232.

Belongs to the tetrahydrofolate dehydrogenase/cyclohydrolase family. In terms of assembly, homodimer.

It carries out the reaction (6R)-5,10-methylene-5,6,7,8-tetrahydrofolate + NADP(+) = (6R)-5,10-methenyltetrahydrofolate + NADPH. The enzyme catalyses (6R)-5,10-methenyltetrahydrofolate + H2O = (6R)-10-formyltetrahydrofolate + H(+). Its pathway is one-carbon metabolism; tetrahydrofolate interconversion. In terms of biological role, catalyzes the oxidation of 5,10-methylenetetrahydrofolate to 5,10-methenyltetrahydrofolate and then the hydrolysis of 5,10-methenyltetrahydrofolate to 10-formyltetrahydrofolate. In Rickettsia massiliae (strain Mtu5), this protein is Bifunctional protein FolD.